Here is a 745-residue protein sequence, read N- to C-terminus: Probable xyloglucan glycosyltransferase 3 (745 aa).

The next 2 membrane-spanning stretches (helical) occupy residues 116-136 and 196-216; these read GFLLLSLAMLAFETVAHLKGW and IDYIAWAIQKLSGFCIALFMV. Residue Asp300 is part of the active site. Residues Asp359 and Asp361 each contribute to the substrate site. Asp453 is a catalytic residue. Transmembrane regions (helical) follow at residues 531–551, 556–576, 695–715, and 720–740; these read LILPFYSFTLFCVILPLTMFV, LPIWVICYVPVIMSVLNILPA, IFKKELALAFLLLTAATRSLL, and LHFYFLLFQGVTFLAVGLDLI.

It belongs to the glycosyltransferase 2 family. Plant cellulose synthase-like C subfamily.

Its subcellular location is the golgi apparatus membrane. Its function is as follows. Probable beta-1,4-glucan synthase rather involved in the synthesis of the xyloglucan backbone than cellulose. Seems to work simultaneously with xyloglucan 6-xylosyltransferase. Xyloglucan is a noncellulosic polysaccharides of plant cell wall and consists of a glucan backbone substituted by xylose, galactose and fucose. The polypeptide is Probable xyloglucan glycosyltransferase 3 (CSLC3) (Oryza sativa subsp. japonica (Rice)).